The sequence spans 302 residues: Spheroidin-like protein (302 aa).

A signal peptide spans 1–19 (MIALLIALFAAIHAPAVRS). Residues Asn-193 and Asn-293 are each glycosylated (N-linked (GlcNAc...) asparagine; by host).

In terms of assembly, homodimer; disulfide-linked.

The protein localises to the host membrane. Its function is as follows. Component of the virus occlusion bodies, which are large proteinaceous structures (polyhedra), that protect the virus from the outside environment for extended periods until they are ingested by insect larvae. This chain is Spheroidin-like protein (SLP), found in Autographa californica nuclear polyhedrosis virus (AcMNPV).